A 1123-amino-acid polypeptide reads, in one-letter code: Ubiquitin carboxyl-terminal hydrolase 36 (1123 aa).

Composition is skewed to basic and acidic residues over residues 1–19 (MPIVDKLKEALKPGRKDSA) and 69–90 (GASRHKSGDDPPARRQGSEHTY). 2 disordered regions span residues 1 to 22 (MPIVDKLKEALKPGRKDSADDG) and 67 to 95 (TEGASRHKSGDDPPARRQGSEHTYESCGD). One can recognise a USP domain in the interval 122–423 (AGLHNLGNTC…QAYVLFYLRI (302 aa)). The Nucleophile role is filled by C131. H382 functions as the Proton acceptor in the catalytic mechanism. S429 and S464 each carry phosphoserine. The disordered stretch occupies residues 430–577 (PEGLISRTGS…RQGSWDSRDV (148 aa)). Positions 491-503 (RNGSTLGLKSQNG) are enriched in polar residues. Residues 510 to 519 (PSGSPSPKLS) show a composition bias toward low complexity. A Phosphoserine modification is found at S546. The span at 557–571 (SNSNSSRSGSQRQGS) shows a compositional bias: low complexity. Phosphoserine is present on S582. The interval 589–999 (ATANGHGLKG…ESSSCAPSAN (411 aa)) is disordered. Over residues 597–609 (KGNDESAGLDRRG) the composition is skewed to basic and acidic residues. The segment covering 610–623 (SSSSSPEHSASSDS) has biased composition (low complexity). Over residues 640 to 654 (SQETNCSTAGHSKTP) the composition is skewed to polar residues. S667 is subject to Phosphoserine. Residues 669-681 (VLSNTTTEPASTM) are compositionally biased toward polar residues. Residue S682 is modified to Phosphoserine. Low complexity predominate over residues 687–697 (KKLALSAKKAS). S713 and S742 each carry phosphoserine. Polar residues predominate over residues 773 to 785 (EPRSCSSISTALP). Residues 841–850 (HGKRKRKKKK) show a composition bias toward basic residues. The span at 891-902 (GTQPQVNGQQVG) shows a compositional bias: polar residues. S952 is modified (phosphoserine). Basic and acidic residues predominate over residues 963–975 (QETQRAVEEDGHL).

It belongs to the peptidase C19 family. Interacts with isoform 3 of FBXW7; the interaction inhibits MYC degradation induced by SCF(FBW7) complex. Interacts with NTRK1; USP36 does not deubiquitinate NTRK1. Interacts with NEDD4L (via domains WW1, 3 and 4); the interaction inhibits ubiquitination of, at least, NTRK1, KCNQ2 and KCNQ3 by NEDD4L. Interacts (via C-terminus) with EXOSC10 (via C-terminus); the interaction is facilitated by the association with RNA and promotes sumoylation of EXOSC10. Polyubiquitinated by NEDD4L, no effect on USP36 protein levels. Both proteins interact with and regulate each other's ubiquitination levels. Broadly expressed.

The protein resides in the nucleus. It is found in the nucleolus. Its subcellular location is the cytoplasm. It carries out the reaction Thiol-dependent hydrolysis of ester, thioester, amide, peptide and isopeptide bonds formed by the C-terminal Gly of ubiquitin (a 76-residue protein attached to proteins as an intracellular targeting signal).. Its function is as follows. Deubiquitinase essential for the regulation of nucleolar structure and function. Required for cell and organism viability. Plays an important role in ribosomal RNA processing and protein synthesis, which is mediated, at least in part, through deubiquitination of DHX33, NPM1 and FBL, regulating their protein stability. Functions as a transcriptional repressor by deubiquiting histone H2B at the promoters of genes critical for cellular differentiation, such as CDKN1A, thereby preventing histone H3 'Lys-4' trimethylation (H3K4). Specifically deubiquitinates MYC in the nucleolus, leading to prevent MYC degradation by the proteasome: acts by specifically interacting with isoform 3 of FBXW7 (FBW7gamma) in the nucleolus and counteracting ubiquitination of MYC by the SCF(FBW7) complex. In contrast, it does not interact with isoform 1 of FBXW7 (FBW7alpha) in the nucleoplasm. Interacts to and regulates the actions of E3 ubiquitin-protein ligase NEDD4L over substrates such as NTRK1, KCNQ2 and KCNQ3, affecting their expression an functions. Deubiquitinates SOD2, regulates SOD2 protein stability. Deubiquitinase activity is required to control selective autophagy activation by ubiquitinated proteins. Promotes CEP63 stabilization through 'Lys-48'-linked deubiquitination leading to increased stability. Acts as a SUMO ligase to promote EXOSC10 sumoylation critical for the nucleolar RNA exosome function in rRNA processing. Binds to pre-rRNAs. This chain is Ubiquitin carboxyl-terminal hydrolase 36, found in Homo sapiens (Human).